The sequence spans 221 residues: Probable septum site-determining protein MinC (221 aa).

This sequence belongs to the MinC family. In terms of assembly, interacts with MinD and FtsZ.

In terms of biological role, cell division inhibitor that blocks the formation of polar Z ring septums. Rapidly oscillates between the poles of the cell to destabilize FtsZ filaments that have formed before they mature into polar Z rings. Prevents FtsZ polymerization. This Shewanella sp. (strain MR-7) protein is Probable septum site-determining protein MinC.